The chain runs to 441 residues: Acidic phosphoprotein (441 aa).

Residues M1–S15 constitute a signal peptide (or 24). 2 N-linked (GlcNAc...) asparagine glycosylation sites follow: N21 and N112. 18 repeat units span residues E186–Q193, E194–M201, E202–N209, E210–N217, E218–N225, E226–N233, E234–N241, E242–N249, E250–N257, E258–N265, E266–N273, E274–N281, E282–N289, E290–N297, E298–N305, E306–N313, K353–E360, and Q361–G368. Residues E186–N313 are 16 X 8 AA tandem repeats. A disordered region spans residues L232 to V416. Residues G238–T247 show a composition bias toward low complexity. The segment covering T248 to N273 has biased composition (acidic residues). Residues S294–E306 show a composition bias toward polar residues. A compositionally biased stretch (acidic residues) spans A312–A332. Positions E349 to K371 are enriched in basic and acidic residues. Residues K353–Q370 are 2 X 9 AA tandem repeats. The span at G372–K415 shows a compositional bias: basic residues.

Its subcellular location is the cell membrane. In terms of biological role, during infection, this phosphoprotein probably modulates the structure of the red cell membrane to the advantage of the parasite, although its precise function is not known. The sequence is that of Acidic phosphoprotein (PCEMA1) from Plasmodium chabaudi.